The chain runs to 766 residues: MYLVKSAGSPIYRTLRTLTTSNLMAATIASAKDPLTGPRYEREPNVLRKKLASVVPGTVNLQVLGSGANGAPAAVYLFTDQARYLFNCGEGTQRLAHEHKTRLSRLEQIFLTQNTWASCGGLPGLTLTIQDAGVRDIGLHGPPHLGSMLQSMRRFVVLKNLQVRPNDCSEGACFEDSILKVDSLPLINSEDPTKSVINYICQLKPRAGALNLVKCVEQGVPPGPLLGQLKNGNDITLPDGKVVRSVDVTEASETALSFVFLDVPSENYLPALLTHGKRLKKLGEEKLTEVALVVHFTPYHISSRQVYKDFVVESFSSEAQHIYLSSPLNQFSGYAAAHRIQHQLHQLAPQVFPLLGEQLSCQSQTLSLNLKKTKLDEADSEDKANAKANETEEQGVVAMTNYHLRPRKGLDRTLESKLTPEEYVKETHAVPGFLELLAKFKEEYSFPDNSADSYPKIIFLGTGSCIPNKTRNVSSILIRTAIDAYVLLDCGEGTYGQIVRLYGHEKGQLILRQLQAIYVSHLHADHHIGLIGLLRERRQLKPRADPLILLAPRQIEPWLEFYNRQIETVEDAYTLVGNGELLASPLSGEQVERLGITSISTCLVRHCPNSFGISLTLAAKHNSEPVKITYSGDTMPCQDLIDLGRDSTVLIHEATMEDDLEEEARLKTHSTVSQAIQQGRNMNARHTILTHFSQRYAKCPRLPSDEDMQRVAIAFDNMEVTIEDLQHYHKLYPALFAMYAEYTEELEQRAVKRELKQERKRKLAET.

A mitochondrion-targeting transit peptide spans 1–25 (MYLVKSAGSPIYRTLRTLTTSNLMA).

The protein belongs to the RNase Z family. Homodimer. Requires Zn(2+) as cofactor.

The protein resides in the nucleus. It is found in the mitochondrion. It catalyses the reaction Endonucleolytic cleavage of RNA, removing extra 3' nucleotides from tRNA precursor, generating 3' termini of tRNAs. A 3'-hydroxy group is left at the tRNA terminus and a 5'-phosphoryl group is left at the trailer molecule.. Functionally, zinc phosphodiesterase, which displays some tRNA 3'-processing endonuclease activity of nuclear and mitochondrial pre-tRNA. Probably involved in tRNA maturation, by removing a 3'-trailer from precursor tRNA. May participate in tRNA processing in the developing embryo. The sequence is that of Ribonuclease Z, mitochondrial from Drosophila melanogaster (Fruit fly).